Here is a 476-residue protein sequence, read N- to C-terminus: MSPQTETKASVGFKAGVKDYKLTYYTPDYETKDTDILAAFRVTPQPGVPPEEAGAAVAAESSTGTWTTVWTDGLTSLDRYKGRCYGIEPVLGEENQYIAYVAYPLDLFEEGSVTNMFTSIVGNVFGFKALRALRLEDLRIPTAYVKTFQGPPHGIQVDRDKLNKYGRPLLGCTIKPKLGLSAKNYGRAVYECLRGGLDFTKDDENVNSQPFMRWRDRFLFCAEAIYKAQAETGEIKGHYLNATAGTCEEMMKRAVFARELAVPIVMHDYLTGGCNATTSLAHYCRDNGLLLHIQRAMHAVIDRQKNHGMHFRVLAKALRMSGGDHIHAGTVVGKLEGEREITLGFVDLLRDDFIKKDRSRGIYFTQDWVSLPGVLPVASGGIHVWHMPALTEIFGDDSVLQFGGGTLGHPWGNAPGPVANRVALEACVQARNDGRDLAIHGNEIIREACKWSPELAAACEVWKEIKFEFPALDTFV.

A propeptide spanning residues 1–2 (MS) is cleaved from the precursor. Pro-3 is subject to N-acetylproline. Lys-14 carries the post-translational modification N6,N6,N6-trimethyllysine. Substrate-binding residues include Asn-123 and Thr-173. Residue Lys-175 is the Proton acceptor of the active site. Lys-177 is a binding site for substrate. Positions 201, 203, and 204 each coordinate Mg(2+). Lys-201 is modified (N6-carboxylysine). 3 residues coordinate substrate: Arg-295, His-327, and Ser-379.

Belongs to the RuBisCO large chain family. Type I subfamily. Heterohexadecamer of 8 large chains and 8 small chains; disulfide-linked. The disulfide link is formed within the large subunit homodimers. Mg(2+) serves as cofactor. In terms of processing, the disulfide bond which can form in the large chain dimeric partners within the hexadecamer appears to be associated with oxidative stress and protein turnover.

It is found in the plastid. The protein resides in the chloroplast. It carries out the reaction 2 (2R)-3-phosphoglycerate + 2 H(+) = D-ribulose 1,5-bisphosphate + CO2 + H2O. The catalysed reaction is D-ribulose 1,5-bisphosphate + O2 = 2-phosphoglycolate + (2R)-3-phosphoglycerate + 2 H(+). RuBisCO catalyzes two reactions: the carboxylation of D-ribulose 1,5-bisphosphate, the primary event in carbon dioxide fixation, as well as the oxidative fragmentation of the pentose substrate in the photorespiration process. Both reactions occur simultaneously and in competition at the same active site. This is Ribulose bisphosphate carboxylase large chain from Barnadesia caryophylla (Xenophontia caryophylla).